A 159-amino-acid polypeptide reads, in one-letter code: SsrA-binding protein (159 aa).

Belongs to the SmpB family.

Its subcellular location is the cytoplasm. Required for rescue of stalled ribosomes mediated by trans-translation. Binds to transfer-messenger RNA (tmRNA), required for stable association of tmRNA with ribosomes. tmRNA and SmpB together mimic tRNA shape, replacing the anticodon stem-loop with SmpB. tmRNA is encoded by the ssrA gene; the 2 termini fold to resemble tRNA(Ala) and it encodes a 'tag peptide', a short internal open reading frame. During trans-translation Ala-aminoacylated tmRNA acts like a tRNA, entering the A-site of stalled ribosomes, displacing the stalled mRNA. The ribosome then switches to translate the ORF on the tmRNA; the nascent peptide is terminated with the 'tag peptide' encoded by the tmRNA and targeted for degradation. The ribosome is freed to recommence translation, which seems to be the essential function of trans-translation. The sequence is that of SsrA-binding protein from Saccharophagus degradans (strain 2-40 / ATCC 43961 / DSM 17024).